The following is a 118-amino-acid chain: Small ribosomal subunit protein uS13 (118 aa).

The interval 92-118 (RRGHPLRGQRTRTNARTRKGPRKAIRK) is disordered.

The protein belongs to the universal ribosomal protein uS13 family. In terms of assembly, part of the 30S ribosomal subunit. Forms a loose heterodimer with protein S19. Forms two bridges to the 50S subunit in the 70S ribosome.

Located at the top of the head of the 30S subunit, it contacts several helices of the 16S rRNA. In the 70S ribosome it contacts the 23S rRNA (bridge B1a) and protein L5 of the 50S subunit (bridge B1b), connecting the 2 subunits; these bridges are implicated in subunit movement. Contacts the tRNAs in the A and P-sites. In Xanthomonas campestris pv. campestris (strain ATCC 33913 / DSM 3586 / NCPPB 528 / LMG 568 / P 25), this protein is Small ribosomal subunit protein uS13.